Here is a 353-residue protein sequence, read N- to C-terminus: Ubiquinol oxidase 2, mitochondrial (353 aa).

Residues 1–21 (MSQLITKAALRVLLVCGRGNC) constitute a mitochondrion transit peptide. A helical membrane pass occupies residues 178 to 198 (AMMLETVAAVPGMVGGMLLHL). Positions 182, 221, and 224 each coordinate Fe cation. Residues 240–260 (LLVMLVQGIFFNSFFVCYVIS) form a helical membrane-spanning segment. Glutamate 272, glutamate 323, and histidine 326 together coordinate Fe cation.

Belongs to the alternative oxidase family. Homodimer; disulfide-linked. Fe cation is required as a cofactor. Maximally expressed in dry seeds. Detected in roots, stems and leaves.

The protein localises to the mitochondrion inner membrane. It carries out the reaction 2 a ubiquinol + O2 = 2 a ubiquinone + 2 H2O. Catalyzes the cyanide-resistant oxidation of ubiquinol and the reduction of molecular oxygen to water, but does not translocate protons and consequently is not linked to oxidative phosphorylation. May increase respiration when the cytochrome respiratory pathway is restricted, or in response to low temperatures. The polypeptide is Ubiquinol oxidase 2, mitochondrial (AOX2) (Arabidopsis thaliana (Mouse-ear cress)).